An 876-amino-acid polypeptide reads, in one-letter code: Protein TORMOZ EMBRYO DEFECTIVE (876 aa).

WD repeat units follow at residues 58-97, 100-139, 142-183, 190-229, 255-294, 308-347, 356-396, 399-441, 444-484, 497-536, 539-580, 581-620, and 623-662; these read GESD…CIRS, GHEG…CTHY, GHKG…TEKK, KHFS…CKAT, LDQK…CLYE, ESKR…EETE, GYNE…CSYV, GHKE…CIGV, GHNG…EDSE, AHDK…HVVT, GHKR…KTFE, GHTS…CIAT, and QHED…DKED. The disordered stretch occupies residues 816 to 876; that stretch reads VETEYPKDEK…AEAQGSVIAV (61 aa). Over residues 819-831 the composition is skewed to basic and acidic residues; sequence EYPKDEKKKEKDV. Positions 848-855 match the Nuclear localization signal motif; the sequence is SRKRKSQK. Basic residues predominate over residues 849–864; sequence RKRKSQKSKGKSNKKR.

As to expression, preferentially expressed in dividing cells in a variety of tissues and meristematic regions.

The protein localises to the nucleus. Its subcellular location is the nucleolus. Essential protein involved in the regulation of cell division planes during embryogenesis which defines cell patterning, especially longitudinal division planes of the proembryo, probably via the regulation of embryo patterning genes expression patterns. This Arabidopsis thaliana (Mouse-ear cress) protein is Protein TORMOZ EMBRYO DEFECTIVE.